Here is a 257-residue protein sequence, read N- to C-terminus: ECF RNA polymerase sigma factor SigE (257 aa).

The sigma-70 factor domain-2 stretch occupies residues 87-153 (MPSWDELVRQ…RITTNLFLDM (67 aa)). Residues 111–114 (NQHD) carry the Polymerase core binding motif. The segment at 186 to 236 (SRLGADLQAALDSLPPEFRAAVVLCDIEGLSYEEIGATLGVKLGTVRSRIH) is sigma-70 factor domain-4. The segment at residues 211–230 (DIEGLSYEEIGATLGVKLGT) is a DNA-binding region (H-T-H motif).

It belongs to the sigma-70 factor family. ECF subfamily. In terms of assembly, interacts transiently with the RNA polymerase catalytic core formed by RpoA, RpoB, RpoC and RpoZ (2 alpha, 1 beta, 1 beta' and 1 omega subunit) to form the RNA polymerase holoenzyme that can initiate transcription. Interacts (via sigma-70 factor domain 4) with RseA; interaction is abrogated by treatment of cells with H(2)O(2) or detergent.

Functionally, sigma factors are initiation factors that promote the attachment of RNA polymerase to specific initiation sites and are then released. Extracytoplasmic function (ECF) sigma factors are held in an inactive form by an anti-sigma factor until released. The chain is ECF RNA polymerase sigma factor SigE (sigE) from Mycolicibacterium smegmatis (strain ATCC 700084 / mc(2)155) (Mycobacterium smegmatis).